The primary structure comprises 356 residues: Heparan sulfate 2-O-sulfotransferase 1 (356 aa).

Residues 1 to 11 lie on the Cytoplasmic side of the membrane; the sequence is MGLLRIMMPPK. The chain crosses the membrane as a helical; Signal-anchor for type II membrane protein span at residues 12–28; that stretch reads LQLLAVVAFAVAMLFLE. The stretch at 24–51 forms a coiled coil; it reads MLFLENQIQKLEESRAKLERAIARHEVR. The Lumenal segment spans residues 29–356; it reads NQIQKLEESR…FYEKIYPKSN (328 aa). Adenosine 3',5'-bisphosphate-binding residues include lysine 83, threonine 84, alanine 85, serine 86, threonine 87, and serine 88. N-linked (GlcNAc...) asparagine glycans are attached at residues asparagine 108 and asparagine 127. Residues histidine 140 and histidine 142 contribute to the active site. Adenosine 3',5'-bisphosphate is bound by residues arginine 164 and serine 172. 2 disulfide bridges follow: cysteine 201–cysteine 209 and cysteine 222–cysteine 228. Adenosine 3',5'-bisphosphate-binding residues include tyrosine 279, serine 285, threonine 290, and lysine 293.

This sequence belongs to the sulfotransferase 3 family. Homotrimer. Interacts with the C5-epimerase GLCE. In terms of processing, N-glycosylated.

Its subcellular location is the golgi apparatus membrane. Functionally, catalyzes the transfer of a sulfo group from 3'-phospho-5'-adenylyl sulfate (PAPS) to the 2-OH position of iduronic acid (IdoA) or glucuronic acid (GlcA) within the heparan sulfate (HS) chain and participates in HS biosynthesis. Required for metanephric development of kidney formation, suggesting that 2-O-sulfation within HS is essential for signaling between ureteric bud and metanephric mesenchyme. The chain is Heparan sulfate 2-O-sulfotransferase 1 from Cricetulus griseus (Chinese hamster).